Reading from the N-terminus, the 968-residue chain is uncharacterized protein (968 aa).

5 disordered regions span residues 124 to 177, 348 to 437, 572 to 595, 608 to 627, and 837 to 877; these read SSIS…FSFP, QEDS…VNDS, TTTT…QQNT, PKAS…GSSK, and KASK…KKGK. The segment covering 131–157 has biased composition (polar residues); it reads TIESNYLSNPSSPCQSTPILESSTPFS. 3 stretches are compositionally biased toward low complexity: residues 158-177, 352-431, and 572-593; these read QKLM…FSFP, NNNN…NCNN, and TTTT…QQQQ. The segment covering 841–857 has biased composition (low complexity); it reads DSSSSPTASSAAPGDSS.

This is an uncharacterized protein from Dictyostelium discoideum (Social amoeba).